Here is a 131-residue protein sequence, read N- to C-terminus: Small ribosomal subunit protein uS8 (131 aa).

Belongs to the universal ribosomal protein uS8 family. Part of the 30S ribosomal subunit. Contacts proteins S5 and S12.

Its function is as follows. One of the primary rRNA binding proteins, it binds directly to 16S rRNA central domain where it helps coordinate assembly of the platform of the 30S subunit. In Desulforudis audaxviator (strain MP104C), this protein is Small ribosomal subunit protein uS8.